A 910-amino-acid chain; its full sequence is Triacylglycerol lipase 4 (910 aa).

The segment covering 51–66 has biased composition (basic and acidic residues); it reads SKDNSDVERVEEDAGK. The disordered stretch occupies residues 51–120; the sequence is SKDNSDVERV…TDEGEDERQG (70 aa). Ser55 carries the post-translational modification Phosphoserine. Over residues 70–85 the composition is skewed to polar residues; sequence TGKNKTTNKVNFNLDT. The segment covering 90–116 has biased composition (acidic residues); the sequence is KLDDDQETVTENENNDIEMVETDEGED. The 202-residue stretch at 282–483 folds into the PNPLA domain; that stretch reads LVLSGGGTFG…DNDLPISRLS (202 aa). The GXGXXG signature appears at 286-291; it reads GGGTFG. Residues 313–317 carry the GXSXG motif; the sequence is GSSAG. Ser315 acts as the Nucleophile in catalysis. Asp470 functions as the Proton acceptor in the catalytic mechanism. Disordered stretches follow at residues 657–683 and 713–777; these read EQTSDESKNPENSTLLTRTPTKGDNHI and SPSG…PILQ. The span at 666 to 683 shows a compositional bias: polar residues; that stretch reads PENSTLLTRTPTKGDNHI. Thr675 is subject to Phosphothreonine; by Cdk1. Phosphoserine is present on residues Ser737, Ser749, Ser751, and Ser836. Polar residues predominate over residues 739-768; it reads TISTSRRPAKSFSFSVASPTSRMLRQSSKI. Positions 874–910 are disordered; that stretch reads RRHSIDGRPPSQATKSSPFRSRPSSSTQHKSTTSFTQ. Positions 889 to 899 are enriched in low complexity; sequence SSPFRSRPSSS. At Ser890 the chain carries Phosphoserine; by Cdk1. Polar residues predominate over residues 900 to 910; the sequence is TQHKSTTSFTQ.

In terms of processing, phosphorylation at Thr-675 and Ser-890 by Cdk1/CDC28 stimulates enzyme activity in vivo.

It is found in the lipid droplet. The enzyme catalyses a triacylglycerol + H2O = a diacylglycerol + a fatty acid + H(+). The catalysed reaction is 1,2,3-tri-(9Z-octadecenoyl)-glycerol + H2O = di-(9Z)-octadecenoylglycerol + (9Z)-octadecenoate + H(+). It carries out the reaction 1,2-dihexadecanoyl-sn-glycero-3-phosphocholine + H2O = 1-hexadecanoyl-sn-glycero-3-phosphocholine + hexadecanoate + H(+). It catalyses the reaction cholesteryl (9Z-octadecenoate) + H2O = cholesterol + (9Z)-octadecenoate + H(+). The enzyme catalyses 1-(9Z-octadecenoyl)-sn-glycero-3-phosphate + (9Z)-octadecenoyl-CoA = 1,2-di-(9Z-octadecenoyl)-sn-glycero-3-phosphate + CoA. With respect to regulation, phosphorylated and activated by cyclin-dependent kinase 1 (Cdk1/CDC28). Loses its lipolytic activity in cells lacking nonpolar lipids, but retains its side activity as lysophospholipid acyltransferase. Its function is as follows. Lipid particle-localized triacylglycerol (TAG) lipase. The lipid droplet/particle is a lipid storage compartment which serves as a depot of energy and building blocks for membrane lipid biosynthesis. Involved in the mobilization of the non-polar storage lipids triacylglycerols (TAGs) from lipid particles by hydrolysis of TAGs, releasing and supplying specific fatty acids to the appropriate metabolic pathways. Also has steryl ester (SE) hydrolase and phospholipase A(2) (PLA(2)) activities, and catalyzes the acylation of lysophosphatidic acid (LPA). Contributes to early bud formation in late G1 phase of the cell cycle upon phosphorylation and activation by cyclin-dependent kinase 1 (Cdk1/CDC28). This chain is Triacylglycerol lipase 4 (TGL4), found in Saccharomyces cerevisiae (strain ATCC 204508 / S288c) (Baker's yeast).